An 896-amino-acid chain; its full sequence is Chromatin assembly factor 1 subunit A-A (896 aa).

Disordered regions lie at residues 1–23 (MPGKEAAVNVMQSSTKSNTKKMV), 185–377 (TSTS…EEEK), and 552–610 (DSDE…DPEN). A compositionally biased stretch (polar residues) spans 10–21 (VMQSSTKSNTKK). A compositionally biased stretch (low complexity) spans 211–226 (ASVSSSSSPVSLSSPD). Residues 227–236 (AQTGSQFRNR) show a composition bias toward polar residues. Over residues 237–246 (SSPSTSTTPT) the composition is skewed to low complexity. Residues 255–284 (SADKNKTKDKDKQRQAEKEERERAKKEARS) show a composition bias toward basic and acidic residues. The segment covering 285–302 (AKKKKRQGLLKNLQRKRG) has biased composition (basic residues). Residues 308–377 (SGKEYKKEKK…EEKRLKEEEK (70 aa)) are compositionally biased toward basic and acidic residues. Acidic residues-rich tracts occupy residues 552 to 563 (DSDEEWEEEEPG), 572 to 586 (ENDDDPKEDDEDDDG), and 595 to 607 (SDDEGVSDEECTD). Residues 642-678 (CVWWDSKASEISLLQKFSACILESPAVDEELAQEISS) are necessary for homodimerization, competence for chromatin assembly. The disordered stretch occupies residues 724-743 (SDAAGNESTSPNVTPQTPSN). Positions 729-743 (NESTSPNVTPQTPSN) are enriched in polar residues.

This sequence belongs to the CHAF1A family. Homodimer.

The protein resides in the nucleus. Functionally, involved in chromatin assembly in DNA replication and DNA repair. In Xenopus laevis (African clawed frog), this protein is Chromatin assembly factor 1 subunit A-A (chaf1a-a).